A 105-amino-acid chain; its full sequence is Phosphoribosyl-AMP cyclohydrolase (105 aa).

A Mg(2+)-binding site is contributed by aspartate 72. Cysteine 73 lines the Zn(2+) pocket. Mg(2+)-binding residues include aspartate 74 and aspartate 76. Zn(2+) contacts are provided by cysteine 89 and cysteine 96.

It belongs to the PRA-CH family. As to quaternary structure, homodimer. It depends on Mg(2+) as a cofactor. Requires Zn(2+) as cofactor.

It localises to the cytoplasm. It catalyses the reaction 1-(5-phospho-beta-D-ribosyl)-5'-AMP + H2O = 1-(5-phospho-beta-D-ribosyl)-5-[(5-phospho-beta-D-ribosylamino)methylideneamino]imidazole-4-carboxamide. The protein operates within amino-acid biosynthesis; L-histidine biosynthesis; L-histidine from 5-phospho-alpha-D-ribose 1-diphosphate: step 3/9. Functionally, catalyzes the hydrolysis of the adenine ring of phosphoribosyl-AMP. The polypeptide is Phosphoribosyl-AMP cyclohydrolase (Listeria innocua serovar 6a (strain ATCC BAA-680 / CLIP 11262)).